Reading from the N-terminus, the 85-residue chain is Beta-toxin Ct6 (85 aa).

The first 18 residues, M1–A18, serve as a signal peptide directing secretion. The LCN-type CS-alpha/beta domain occupies K19–G84. Cystine bridges form between C30–C83, C34–C59, C43–C64, and C47–C66. C83 carries the post-translational modification Cysteine amide.

It belongs to the long (4 C-C) scorpion toxin superfamily. Sodium channel inhibitor family. Beta subfamily. As to expression, expressed by the venom gland.

It localises to the secreted. Functionally, beta toxins bind voltage-independently at site-4 of sodium channels (Nav) and shift the voltage of activation toward more negative potentials thereby affecting sodium channel activation and promoting spontaneous and repetitive firing. This chain is Beta-toxin Ct6, found in Centruroides tecomanus (Scorpion).